Here is a 192-residue protein sequence, read N- to C-terminus: 3-isopropylmalate dehydratase small subunit (192 aa).

The protein belongs to the LeuD family. LeuD type 1 subfamily. As to quaternary structure, heterodimer of LeuC and LeuD.

It carries out the reaction (2R,3S)-3-isopropylmalate = (2S)-2-isopropylmalate. It functions in the pathway amino-acid biosynthesis; L-leucine biosynthesis; L-leucine from 3-methyl-2-oxobutanoate: step 2/4. Catalyzes the isomerization between 2-isopropylmalate and 3-isopropylmalate, via the formation of 2-isopropylmaleate. The chain is 3-isopropylmalate dehydratase small subunit from Zymomonas mobilis subsp. mobilis (strain ATCC 31821 / ZM4 / CP4).